Reading from the N-terminus, the 324-residue chain is NAC domain-containing protein 30 (324 aa).

The region spanning 9-158 (MPPGFRFHPT…GWVVCRAFRK (150 aa)) is the NAC domain. Residues 109-164 (IGMRKTLVYYKGRAPNGRKSDWIMHEYRLQNSELAPVQEEGWVVCRAFRKPIPNQR) mediate DNA binding. A compositionally biased stretch (low complexity) spans 232-244 (LPQLDSPSLSPSL). The segment at 232 to 259 (LPQLDSPSLSPSLGTNKDQNESFEQEEE) is disordered.

Belongs to the plant vascular related NAC-domain protein family. Forms homodimer and heterodimers with other VND proteins (e.g. NAC037/VND1, NAC076/VND2 and NAC105/VND3) via their N-termini. Interacts with NAC083/VNI2. As to expression, expressed in developing protoxylems in roots and shoots. Detected in root protoxylem poles and in vessels of protoxylems, outermost metaxylems, inner metaxylems, shoots and hypocotyls. Expressed in roots, hypocotyls, cotyledons and leaves. Accumulates in the xylem but not in interfascicular fibers or pith cells in inflorescence stems. Present in developing vessels of the secondary xylem in roots undergoing secondary growth.

The protein resides in the nucleus. Functionally, transcription activator that binds to the secondary wall NAC binding element (SNBE), 5'-(T/A)NN(C/T)(T/C/G)TNNNNNNNA(A/C)GN(A/C/T)(A/T)-3', in the promoter of target genes (e.g. genes involved in secondary wall biosynthesis, cell wall modification such as xylan accumulation, and programmed cell death). Involved in xylem formation in roots and shoots, especially regulating protoxylem vessel differentiation by promoting immature xylem vessel-specific genes expression. Can activate the expression of several genes including XCP1, MYB46, NAC010/SND3, MYB103, MYB58, MYB63, MYB83, KNAT7, ASL19 and ASL20. Required for the soilborne fungal pathogen Verticillium longisporum-induced transdifferentiation of chloroplast-containing bundle sheath cells to functional xylem elements leading to stunted growth, vein clearing, and leaf chloroses, as well as xylem hyperplasia within the vasculature of leaves, hypocotyls, and roots due to reinitiation of cambial activity and transdifferentiation of xylem parenchyma cells. This developmental reprogramming also mediates an increased drought stress tolerance. The sequence is that of NAC domain-containing protein 30 from Arabidopsis thaliana (Mouse-ear cress).